The chain runs to 177 residues: Centromere protein R (177 aa).

Lysine 8 is covalently cross-linked (Glycyl lysine isopeptide (Lys-Gly) (interchain with G-Cter in SUMO2)). The LXXLL motif motif lies at 9–13 (LDGLL). Position 17 is a phosphoserine (serine 17). Positions 20-50 (PSKITRKKSVITYSPTTGTCQMSLFASPTSS) are DD1. A Glycyl lysine isopeptide (Lys-Gly) (interchain with G-Cter in SUMO2) cross-link involves residue lysine 22. A Phosphoserine modification is found at serine 28. Residues 41 to 50 (MSLFASPTSS) show a composition bias toward polar residues. The interval 41–81 (MSLFASPTSSEEQKHRNGLSNEKRKKLNHPSLTESKESTTK) is disordered. Positions 63–66 (KRKK) match the Nuclear localization signal motif. Phosphoserine is present on serine 71. Residues 83–113 (NDEFMMLLSKVEKLSEEIMEIMQNLSSIQAL) are a coiled coil. Residues 172–176 (LKAIL) carry the LXXIL motif motif.

As to quaternary structure, homodimer; mediated by the coiled coil domain. Isoform 3, but not other isoforms, interacts with the cytoplasmic tail of integrin ITGB3. The relevance of the interaction with ITGB3 is however uncertain, since isoform 3 is mainly nuclear. Interacts with CCNA2 and MTA1. Interacts with NFKB1 NF-kappa-B subunit. Component of the CENPA-CAD complex, composed of CENPI, CENPK, CENPL, CENPO, CENPP, CENPQ, CENPR and CENPS. The CENPA-CAD complex interacts with the CENPA-NAC complex, at least composed of CENPA, CENPC, CENPH, CENPM, CENPN, CENPT and CENPU. Interacts with TASOR. In terms of tissue distribution, widely expressed. Expressed in spleen, thymus, prostate, ovary, small intestine and white blood cells. Highly expressed in testis and colon. Isoform 4 is expressed in platelets, lymphocytes and granulocytes.

Its subcellular location is the nucleus. It is found in the chromosome. The protein localises to the centromere. It localises to the kinetochore. The protein resides in the cytoplasm. In terms of biological role, transcription coregulator that can have both coactivator and corepressor functions. Isoform 1, but not other isoforms, is involved in the coactivation of nuclear receptors for retinoid X (RXRs) and thyroid hormone (TRs) in a ligand-dependent fashion. In contrast, it does not coactivate nuclear receptors for retinoic acid, vitamin D, progesterone receptor, nor glucocorticoid. Acts as a coactivator for estrogen receptor alpha. Acts as a transcriptional corepressor via its interaction with the NFKB1 NF-kappa-B subunit, possibly by interfering with the transactivation domain of NFKB1. Induces apoptosis in breast cancer cells, but not in other cancer cells, via a caspase-2 mediated pathway that involves mitochondrial membrane permeabilization but does not require other caspases. May also act as an inhibitor of cyclin A-associated kinase. Also acts a component of the CENPA-CAD (nucleosome distal) complex, a complex recruited to centromeres which is involved in assembly of kinetochore proteins, mitotic progression and chromosome segregation. May be involved in incorporation of newly synthesized CENPA into centromeres via its interaction with the CENPA-NAC complex. In Homo sapiens (Human), this protein is Centromere protein R (ITGB3BP).